A 733-amino-acid chain; its full sequence is Photosystem I P700 chlorophyll a apoprotein A2 (733 aa).

8 helical membrane passes run 46–69 (IFAS…FHVA), 134–157 (LYLG…LHLQ), 174–198 (LNHH…HVAL), 272–290 (IAHH…GHMY), 329–352 (LHIQ…QHMY), 368–394 (AALY…IFFV), 416–438 (AIIS…LYIH), and 516–534 (FLVH…LILV). Residues Cys-558 and Cys-567 each contribute to the [4Fe-4S] cluster site. The next 2 helical transmembrane spans lie at 574–595 (AFYL…YWHW) and 642–664 (LSVW…MFLI). Chlorophyll a-binding residues include His-653, Met-661, and Tyr-669. Phylloquinone is bound at residue Trp-670. A helical membrane pass occupies residues 706–726 (LVGLVHFAVGYILTYAAFVIA).

The protein belongs to the PsaA/PsaB family. In terms of assembly, the PsaA/B heterodimer binds the P700 chlorophyll special pair and subsequent electron acceptors. PSI consists of a core antenna complex that captures photons, and an electron transfer chain that converts photonic excitation into a charge separation. The eukaryotic PSI reaction center is composed of at least 11 subunits. Requires P700 is a chlorophyll a/chlorophyll a' dimer, A0 is one or more chlorophyll a, A1 is one or both phylloquinones and FX is a shared 4Fe-4S iron-sulfur center. as cofactor.

Its subcellular location is the plastid. The protein localises to the chloroplast thylakoid membrane. It catalyses the reaction reduced [plastocyanin] + hnu + oxidized [2Fe-2S]-[ferredoxin] = oxidized [plastocyanin] + reduced [2Fe-2S]-[ferredoxin]. In terms of biological role, psaA and PsaB bind P700, the primary electron donor of photosystem I (PSI), as well as the electron acceptors A0, A1 and FX. PSI is a plastocyanin/cytochrome c6-ferredoxin oxidoreductase, converting photonic excitation into a charge separation, which transfers an electron from the donor P700 chlorophyll pair to the spectroscopically characterized acceptors A0, A1, FX, FA and FB in turn. Oxidized P700 is reduced on the lumenal side of the thylakoid membrane by plastocyanin or cytochrome c6. This is Photosystem I P700 chlorophyll a apoprotein A2 from Trieres chinensis (Marine centric diatom).